Consider the following 367-residue polypeptide: Dual-specificity RNA methyltransferase RlmN (367 aa).

E91 acts as the Proton acceptor in catalysis. The 236-residue stretch at 102 to 337 (GKVRMTQCLS…AIIRKSKGQD (236 aa)) folds into the Radical SAM core domain. C109 and C342 are oxidised to a cystine. 3 residues coordinate [4Fe-4S] cluster: C116, C120, and C123. Residues 169–170 (GE), S201, 223–225 (SLH), and N299 contribute to the S-adenosyl-L-methionine site. The active-site S-methylcysteine intermediate is the C342.

The protein belongs to the radical SAM superfamily. RlmN family. It depends on [4Fe-4S] cluster as a cofactor.

It localises to the cytoplasm. The enzyme catalyses adenosine(2503) in 23S rRNA + 2 reduced [2Fe-2S]-[ferredoxin] + 2 S-adenosyl-L-methionine = 2-methyladenosine(2503) in 23S rRNA + 5'-deoxyadenosine + L-methionine + 2 oxidized [2Fe-2S]-[ferredoxin] + S-adenosyl-L-homocysteine. It catalyses the reaction adenosine(37) in tRNA + 2 reduced [2Fe-2S]-[ferredoxin] + 2 S-adenosyl-L-methionine = 2-methyladenosine(37) in tRNA + 5'-deoxyadenosine + L-methionine + 2 oxidized [2Fe-2S]-[ferredoxin] + S-adenosyl-L-homocysteine. Functionally, specifically methylates position 2 of adenine 2503 in 23S rRNA and position 2 of adenine 37 in tRNAs. m2A2503 modification seems to play a crucial role in the proofreading step occurring at the peptidyl transferase center and thus would serve to optimize ribosomal fidelity. The sequence is that of Dual-specificity RNA methyltransferase RlmN from Nitratidesulfovibrio vulgaris (strain DSM 19637 / Miyazaki F) (Desulfovibrio vulgaris).